Here is a 296-residue protein sequence, read N- to C-terminus: GTPase Era (296 aa).

Positions 2-171 constitute an Era-type G domain; the sequence is KAGFIAVVGR…LEALDPYLED (170 aa). Residues 10–17 are G1; it reads GRPNVGKS. 10 to 17 contributes to the GTP binding site; sequence GRPNVGKS. The tract at residues 36–40 is G2; sequence GTTRD. The interval 57-60 is G3; the sequence is DTPG. Residues 57–61 and 120–123 each bind GTP; these read DTPGI and NKVD. The G4 stretch occupies residues 120-123; it reads NKVD. Residues 150-152 are G5; the sequence is ASG. The region spanning 202-279 is the KH type-2 domain; sequence TRDEIPHSVA…YLGLWVKVKD (78 aa).

It belongs to the TRAFAC class TrmE-Era-EngA-EngB-Septin-like GTPase superfamily. Era GTPase family. As to quaternary structure, monomer.

It is found in the cytoplasm. The protein localises to the cell inner membrane. Its function is as follows. An essential GTPase that binds both GDP and GTP, with rapid nucleotide exchange. Plays a role in 16S rRNA processing and 30S ribosomal subunit biogenesis and possibly also in cell cycle regulation and energy metabolism. In Fusobacterium nucleatum subsp. nucleatum (strain ATCC 25586 / DSM 15643 / BCRC 10681 / CIP 101130 / JCM 8532 / KCTC 2640 / LMG 13131 / VPI 4355), this protein is GTPase Era.